The sequence spans 412 residues: Chorismate synthase (412 aa).

The NADP(+) site is built by arginine 40 and arginine 46. FMN is bound by residues 134-136 (RAS), 255-256 (QA), glycine 299, 314-318 (KPIAT), and arginine 340.

The protein belongs to the chorismate synthase family. As to quaternary structure, homotetramer. The cofactor is FMNH2.

The enzyme catalyses 5-O-(1-carboxyvinyl)-3-phosphoshikimate = chorismate + phosphate. Its pathway is metabolic intermediate biosynthesis; chorismate biosynthesis; chorismate from D-erythrose 4-phosphate and phosphoenolpyruvate: step 7/7. Catalyzes the anti-1,4-elimination of the C-3 phosphate and the C-6 proR hydrogen from 5-enolpyruvylshikimate-3-phosphate (EPSP) to yield chorismate, which is the branch point compound that serves as the starting substrate for the three terminal pathways of aromatic amino acid biosynthesis. This reaction introduces a second double bond into the aromatic ring system. The polypeptide is Chorismate synthase (Clavibacter michiganensis subsp. michiganensis (strain NCPPB 382)).